The primary structure comprises 337 residues: Ferredoxin--NADP reductase (337 aa).

The FAD site is built by Glu-42, Gln-50, Tyr-55, Val-97, Phe-130, Asp-292, and Thr-333.

This sequence belongs to the ferredoxin--NADP reductase type 2 family. In terms of assembly, homodimer. FAD is required as a cofactor.

It carries out the reaction 2 reduced [2Fe-2S]-[ferredoxin] + NADP(+) + H(+) = 2 oxidized [2Fe-2S]-[ferredoxin] + NADPH. This Streptococcus mutans serotype c (strain ATCC 700610 / UA159) protein is Ferredoxin--NADP reductase.